A 155-amino-acid chain; its full sequence is DNA-binding protein inhibitor ID-1 (155 aa).

The 53-residue stretch at 53-105 folds into the bHLH domain; the sequence is LPALLDEQQVNVLLYDMNGCYSRLKELVPTLPQNRKVSKVEILQHVIDYIRDL. A Nuclear export signal motif is present at residues 98-111; that stretch reads VIDYIRDLQLELNS.

As to quaternary structure, heterodimer with other HLH proteins. Interacts with COPS5, IFI204, GATA4 and NKX2-5. Interacts with CLOCK and BMAL1.

It localises to the cytoplasm. The protein resides in the nucleus. Transcriptional regulator (lacking a basic DNA binding domain) which negatively regulates the basic helix-loop-helix (bHLH) transcription factors by forming heterodimers and inhibiting their DNA binding and transcriptional activity. Implicated in regulating a variety of cellular processes, including cellular growth, senescence, differentiation, apoptosis, angiogenesis, and neoplastic transformation. Inhibits skeletal muscle and cardiac myocyte differentiation. Regulates the circadian clock by repressing the transcriptional activator activity of the CLOCK-BMAL1 heterodimer. This Homo sapiens (Human) protein is DNA-binding protein inhibitor ID-1 (ID1).